The following is a 144-amino-acid chain: MKSQWCRPVAMDLGVYQLRHFSISFLSSLLGTENASVRLDNSSSGASVVAIDNKIEQAMDLVKSHLMYAVREEVEVLKEQIKELIEKNSQLEQENNLLKTLASPEQLAQFQAQLQTGSPPATTQPQGTTQPPAQPASQGSGPTA.

Residues 77-98 (LKEQIKELIEKNSQLEQENNLL) are leucine-zipper. Residues 109–144 (QFQAQLQTGSPPATTQPQGTTQPPAQPASQGSGPTA) are disordered. The span at 115-144 (QTGSPPATTQPQGTTQPPAQPASQGSGPTA) shows a compositional bias: low complexity.

It belongs to the TSC-22/Dip/Bun family. In terms of assembly, forms homodimers. Forms a heterodimer with TSC22D4/THG1. Interacts with histone H1-2. Interacts with GNL3.

It localises to the cytoplasm. It is found in the nucleus. Its function is as follows. Transcriptional repressor. Plays a role in the repression of hematopoietic precursor cell growth. Promotes IL2 deprivation-induced apoptosis in T-lymphocytes, via repression of TSC22D3/GILZ transcription and activation of the caspase cascade. Positively regulates cell death in response to TGFB3 during mammary gland involution. In Bos taurus (Bovine), this protein is TSC22 domain family protein 1.